Reading from the N-terminus, the 194-residue chain is Ion-translocating oxidoreductase complex subunit A (194 aa).

6 consecutive transmembrane segments (helical) span residues 1–21 (MVMH…FILV), 48–68 (CVIV…LIPF), 73–93 (LCTM…EIIV), 103–123 (LLGI…IPLM), 135–155 (VLYG…FSSI), and 172–192 (PIAL…DGLI).

This sequence belongs to the NqrDE/RnfAE family. The complex is composed of six subunits: RnfA, RnfB, RnfC, RnfD, RnfE and RnfG.

It localises to the cell inner membrane. Part of a membrane-bound complex that couples electron transfer with translocation of ions across the membrane. The sequence is that of Ion-translocating oxidoreductase complex subunit A from Buchnera aphidicola subsp. Baizongia pistaciae (strain Bp).